We begin with the raw amino-acid sequence, 215 residues long: Urease accessory protein UreG 2 (215 aa).

11-18 lines the GTP pocket; the sequence is GPVGSGKT.

Belongs to the SIMIBI class G3E GTPase family. UreG subfamily. In terms of assembly, homodimer. UreD, UreF and UreG form a complex that acts as a GTP-hydrolysis-dependent molecular chaperone, activating the urease apoprotein by helping to assemble the nickel containing metallocenter of UreC. The UreE protein probably delivers the nickel.

It localises to the cytoplasm. Its function is as follows. Facilitates the functional incorporation of the urease nickel metallocenter. This process requires GTP hydrolysis, probably effectuated by UreG. In Methylorubrum extorquens (strain PA1) (Methylobacterium extorquens), this protein is Urease accessory protein UreG 2.